The primary structure comprises 152 residues: Ubiquitin-conjugating enzyme E2 N (152 aa).

The UBC core domain occupies 3–149 (GLPRRIIKET…ARAWTRLYAM (147 aa)). N6-acetyllysine is present on Lys-82. Cys-87 serves as the catalytic Glycyl thioester intermediate. Residue Lys-92 forms a Glycyl lysine isopeptide (Lys-Gly) (interchain with G-Cter in ISG15) linkage. Ser-131 carries the phosphoserine modification.

It belongs to the ubiquitin-conjugating enzyme family. Heterodimer with UBE2V2. Interacts (UBE2V2-UBE2N heterodimer) with the E3 ligase STUB1 (via the U-box domain); the complex has a specific 'Lys-63'-linked polyubiquitination activity. Interacts with RNF8 and RNF168. Interacts with RNF11. Interacts with the E3 ligases, HLTF and SHPRH; the interactions promote the 'Lys-63'-linked polyubiquitination of PCNA upon genotoxic stress and lead to DNA repair. Interacts with ARIH2 (via RING-type 2). Interacts with OTUB1; leading to inhibit E2-conjugating activity. Interacts with GPS2; leading to inhibit E2-conjugating activity. Interacts with RIGI and RNF135; involved in RIGI ubiquitination and activation. Post-translationally, conjugation to ISG15 impairs formation of the thioester bond with ubiquitin but not interaction with UBE2V2.

It catalyses the reaction S-ubiquitinyl-[E1 ubiquitin-activating enzyme]-L-cysteine + [E2 ubiquitin-conjugating enzyme]-L-cysteine = [E1 ubiquitin-activating enzyme]-L-cysteine + S-ubiquitinyl-[E2 ubiquitin-conjugating enzyme]-L-cysteine.. It participates in protein modification; protein ubiquitination. With respect to regulation, activity is inhibited by binding to OTUB1, which prevents 'Lys-63'-linked polyubiquitination. Activity is inhibited by GPS2, leading to prevent 'Lys-63'-linked polyubiquitination. Functionally, the UBE2V1-UBE2N and UBE2V2-UBE2N heterodimers catalyze the synthesis of non-canonical 'Lys-63'-linked polyubiquitin chains. This type of polyubiquitination does not lead to protein degradation by the proteasome. Mediates transcriptional activation of target genes. Plays a role in the control of progress through the cell cycle and differentiation. Plays a role in the error-free DNA repair pathway and contributes to the survival of cells after DNA damage. Acts together with the E3 ligases, HLTF and SHPRH, in the 'Lys-63'-linked poly-ubiquitination of PCNA upon genotoxic stress, which is required for DNA repair. Appears to act together with E3 ligase RNF5 in the 'Lys-63'-linked polyubiquitination of JKAMP thereby regulating JKAMP function by decreasing its association with components of the proteasome and ERAD. Promotes TRIM5 capsid-specific restriction activity and the UBE2V1-UBE2N heterodimer acts in concert with TRIM5 to generate 'Lys-63'-linked polyubiquitin chains which activate the MAP3K7/TAK1 complex which in turn results in the induction and expression of NF-kappa-B and MAPK-responsive inflammatory genes. Together with RNF135 and UB2V1, catalyzes the viral RNA-dependent 'Lys-63'-linked polyubiquitination of RIGI to activate the downstream signaling pathway that leads to interferon beta production. UBE2V1-UBE2N together with TRAF3IP2 E3 ubiquitin ligase mediate 'Lys-63'-linked polyubiquitination of TRAF6, a component of IL17A-mediated signaling pathway. The polypeptide is Ubiquitin-conjugating enzyme E2 N (Ube2n) (Rattus norvegicus (Rat)).